The primary structure comprises 148 residues: Proline-rich protein 13 (148 aa).

The segment at 1 to 148 (MWNPNAGQPG…SSSSSSSDSD (148 aa)) is disordered. 2 stretches are compositionally biased toward pro residues: residues 27–67 (AHPP…PQPG) and 75–93 (GPYP…PVNP). A compositionally biased stretch (basic residues) spans 109–135 (MQKKMKKAHKKMHKHQKHHKYHKHGKH). Residues 136-148 (SSSSSSSSSSDSD) show a composition bias toward low complexity.

It is found in the nucleus. In terms of biological role, negatively regulates TSP1 expression at the level of transcription. This down-regulation was shown to reduce taxane-induced apoptosis. The polypeptide is Proline-rich protein 13 (PRR13) (Homo sapiens (Human)).